The primary structure comprises 106 residues: Iron-sulfur cluster assembly protein CyaY (106 aa).

Belongs to the frataxin family.

Involved in iron-sulfur (Fe-S) cluster assembly. May act as a regulator of Fe-S biogenesis. The polypeptide is Iron-sulfur cluster assembly protein CyaY (Escherichia coli (strain SMS-3-5 / SECEC)).